Reading from the N-terminus, the 307-residue chain is MLKGRNLLDPMDFSLEELEEVFKLADEIIEEPEKFLHVCDGKILATLFYEPSTRTRFSFEAAMLRLGGQVIGFSEPNSSSVAKGESVADTIRTVGCYADIAAMRHPKEGAPAIAAMYSDIPVINAGDGSHQHPTQTLTDLLTIRSLKGDLSNLTIGCCGDLKFGRTVHSLVKALSRYKNNKFVFMSPEELKIPDYIRKEILEKNNIEYKEISKMEDAMAELDILYMTRVQRERFFNEDDYVRLKDSYILDGEKMKYAKKDMMVLHPLPRVNEIAYEIDQDPRGCYFKQAKYGMYVRMALIAKLLGVR.

The carbamoyl phosphate site is built by arginine 54 and threonine 55. Residue lysine 83 participates in L-aspartate binding. Carbamoyl phosphate contacts are provided by arginine 104, histidine 132, and glutamine 135. L-aspartate contacts are provided by arginine 165 and arginine 228. Leucine 267 and proline 268 together coordinate carbamoyl phosphate.

The protein belongs to the aspartate/ornithine carbamoyltransferase superfamily. ATCase family. Heterododecamer (2C3:3R2) of six catalytic PyrB chains organized as two trimers (C3), and six regulatory PyrI chains organized as three dimers (R2).

It catalyses the reaction carbamoyl phosphate + L-aspartate = N-carbamoyl-L-aspartate + phosphate + H(+). The protein operates within pyrimidine metabolism; UMP biosynthesis via de novo pathway; (S)-dihydroorotate from bicarbonate: step 2/3. Functionally, catalyzes the condensation of carbamoyl phosphate and aspartate to form carbamoyl aspartate and inorganic phosphate, the committed step in the de novo pyrimidine nucleotide biosynthesis pathway. In Clostridium botulinum (strain ATCC 19397 / Type A), this protein is Aspartate carbamoyltransferase catalytic subunit.